The chain runs to 484 residues: Acetyl-coenzyme A carboxylase carboxyl transferase subunit beta, chloroplastic (484 aa).

Positions 223–484 (LWIQCDNCYG…LHAFFPLNKN (262 aa)) constitute a CoA carboxyltransferase N-terminal domain. The Zn(2+) site is built by C227, C230, C243, and C246. The C4-type zinc-finger motif lies at 227-246 (CDNCYGLMYKKVKMNVCEQC).

It belongs to the AccD/PCCB family. As to quaternary structure, acetyl-CoA carboxylase is a heterohexamer composed of biotin carboxyl carrier protein, biotin carboxylase and 2 subunits each of ACCase subunit alpha and ACCase plastid-coded subunit beta (accD). It depends on Zn(2+) as a cofactor.

The protein resides in the plastid. Its subcellular location is the chloroplast stroma. The catalysed reaction is N(6)-carboxybiotinyl-L-lysyl-[protein] + acetyl-CoA = N(6)-biotinyl-L-lysyl-[protein] + malonyl-CoA. It participates in lipid metabolism; malonyl-CoA biosynthesis; malonyl-CoA from acetyl-CoA: step 1/1. In terms of biological role, component of the acetyl coenzyme A carboxylase (ACC) complex. Biotin carboxylase (BC) catalyzes the carboxylation of biotin on its carrier protein (BCCP) and then the CO(2) group is transferred by the transcarboxylase to acetyl-CoA to form malonyl-CoA. In Olimarabidopsis pumila (Dwarf rocket), this protein is Acetyl-coenzyme A carboxylase carboxyl transferase subunit beta, chloroplastic.